Here is a 181-residue protein sequence, read N- to C-terminus: MECIQHESCFDLDDRENAQQLEVQEGTEMVSITQAAKLHNVTRQAIYVAIKQKKLKASKTTRWEIDLKDLEDYKRNRYSRKKSLYQGELLFDNDKGFYSVNQVADMLGIPVQKVYYATRTGTMRGERKGAAWVISQSEIDRYKSEYLNKQTVKKMKEVAVEHPTATPADAVFSGTALFEND.

Belongs to the EUO family.

The protein is Early upstream open reading frame of Chlamydia caviae (strain ATCC VR-813 / DSM 19441 / 03DC25 / GPIC) (Chlamydophila caviae).